The primary structure comprises 166 residues: Putative tRNA (cytidine(34)-2'-O)-methyltransferase (166 aa).

S-adenosyl-L-methionine is bound by residues Leu83, Gly109, Ile130, and Ser138.

The protein belongs to the class IV-like SAM-binding methyltransferase superfamily. RNA methyltransferase TrmH family. TrmL subfamily.

It is found in the cytoplasm. The enzyme catalyses cytidine(34) in tRNA + S-adenosyl-L-methionine = 2'-O-methylcytidine(34) in tRNA + S-adenosyl-L-homocysteine + H(+). It catalyses the reaction 5-carboxymethylaminomethyluridine(34) in tRNA(Leu) + S-adenosyl-L-methionine = 5-carboxymethylaminomethyl-2'-O-methyluridine(34) in tRNA(Leu) + S-adenosyl-L-homocysteine + H(+). Functionally, could methylate the ribose at the nucleotide 34 wobble position in tRNA. This is Putative tRNA (cytidine(34)-2'-O)-methyltransferase from Mycoplasma genitalium (strain ATCC 33530 / DSM 19775 / NCTC 10195 / G37) (Mycoplasmoides genitalium).